Reading from the N-terminus, the 657-residue chain is Zinc finger CCCH domain-containing protein 50 (657 aa).

ANK repeat units follow at residues 68–97 (EARTPLMVAATYGSAGVVSLLVGLGGCVDV) and 104–136 (DGATALHCAASGGSRNAVAVVKLLLAAGADPAT). Over residues 176 to 206 (SVASGSSSPPLSSSPDEGNRSPSSRSSSLSP) the composition is skewed to low complexity. Positions 176 to 222 (SVASGSSSPPLSSSPDEGNRSPSSRSSSLSPITVDRGKKEYPVDPTL) are disordered. C3H1-type zinc fingers lie at residues 274-302 (PYTAVPCPNFRRPGGCPSGDSCEFSHGVF) and 311-333 (YRTRLCKEGAACARRICFFAHDE). Positions 507–566 (YSPRALDPSSLAHSPFGGMSPRSPRTMEPTSPLSARVGAPATQRPSVGSPRNSSAWGTVG) are disordered. Residues 549 to 562 (QRPSVGSPRNSSAW) show a composition bias toward polar residues.

The sequence is that of Zinc finger CCCH domain-containing protein 50 from Oryza sativa subsp. japonica (Rice).